The following is a 618-amino-acid chain: Carbamoyl phosphate synthase large chain, C-terminal section (618 aa).

Positions 1-78 (MDMEKLKEIL…ETFVYKEQDE (78 aa)) are oligomerization domain. Residues 79 to 477 (SNPSDRKKVI…YKAQLSANME (399 aa)) are carbamoyl phosphate synthetic domain. Positions 208 to 399 (SKLLKKLNIP…LAKLATKIML (192 aa)) constitute an ATP-grasp domain. ATP is bound by residues R244, K283, L285, E290, G315, V316, H317, S318, Q358, and E370. Mg(2+) is bound by residues Q358, E370, and N372. Residues Q358, E370, and N372 each coordinate Mn(2+). Residues 476-618 (MELPIVGNVF…ELDARIKNRF (143 aa)) form the MGS-like domain. The segment at 478–618 (LPIVGNVFIS…ELDARIKNRF (141 aa)) is allosteric domain.

This sequence belongs to the CarB family. Composed of two chains; the small (or glutamine) chain promotes the hydrolysis of glutamine to ammonia, which is used by the large (or ammonia) chain to synthesize carbamoyl phosphate. Tetramer of heterodimers (alpha,beta)4. It depends on Mg(2+) as a cofactor. Mn(2+) is required as a cofactor.

It catalyses the reaction hydrogencarbonate + L-glutamine + 2 ATP + H2O = carbamoyl phosphate + L-glutamate + 2 ADP + phosphate + 2 H(+). The catalysed reaction is hydrogencarbonate + NH4(+) + 2 ATP = carbamoyl phosphate + 2 ADP + phosphate + 2 H(+). It functions in the pathway amino-acid biosynthesis; L-arginine biosynthesis; carbamoyl phosphate from bicarbonate: step 1/1. The protein operates within pyrimidine metabolism; UMP biosynthesis via de novo pathway; (S)-dihydroorotate from bicarbonate: step 1/3. Functionally, large subunit of the glutamine-dependent carbamoyl phosphate synthetase (CPSase). CPSase catalyzes the formation of carbamoyl phosphate from the ammonia moiety of glutamine, carbonate, and phosphate donated by ATP, constituting the first step of 2 biosynthetic pathways, one leading to arginine and/or urea and the other to pyrimidine nucleotides. The large subunit (synthetase) binds the substrates ammonia (free or transferred from glutamine from the small subunit), hydrogencarbonate and ATP and carries out an ATP-coupled ligase reaction, activating hydrogencarbonate by forming carboxy phosphate which reacts with ammonia to form carbamoyl phosphate. In Methanocaldococcus jannaschii (strain ATCC 43067 / DSM 2661 / JAL-1 / JCM 10045 / NBRC 100440) (Methanococcus jannaschii), this protein is Carbamoyl phosphate synthase large chain, C-terminal section (carB2).